The following is a 170-amino-acid chain: Crossover junction endodeoxyribonuclease RuvC (170 aa).

Catalysis depends on residues D11, E71, and D143. Mg(2+) is bound by residues D11, E71, and D143.

It belongs to the RuvC family. Homodimer which binds Holliday junction (HJ) DNA. The HJ becomes 2-fold symmetrical on binding to RuvC with unstacked arms; it has a different conformation from HJ DNA in complex with RuvA. In the full resolvosome a probable DNA-RuvA(4)-RuvB(12)-RuvC(2) complex forms which resolves the HJ. It depends on Mg(2+) as a cofactor.

It localises to the cytoplasm. The catalysed reaction is Endonucleolytic cleavage at a junction such as a reciprocal single-stranded crossover between two homologous DNA duplexes (Holliday junction).. Functionally, the RuvA-RuvB-RuvC complex processes Holliday junction (HJ) DNA during genetic recombination and DNA repair. Endonuclease that resolves HJ intermediates. Cleaves cruciform DNA by making single-stranded nicks across the HJ at symmetrical positions within the homologous arms, yielding a 5'-phosphate and a 3'-hydroxyl group; requires a central core of homology in the junction. The consensus cleavage sequence is 5'-(A/T)TT(C/G)-3'. Cleavage occurs on the 3'-side of the TT dinucleotide at the point of strand exchange. HJ branch migration catalyzed by RuvA-RuvB allows RuvC to scan DNA until it finds its consensus sequence, where it cleaves and resolves the cruciform DNA. In Rhizobium meliloti (strain 1021) (Ensifer meliloti), this protein is Crossover junction endodeoxyribonuclease RuvC.